The following is a 130-amino-acid chain: Glycine cleavage system H protein (130 aa).

The 83-residue stretch at 24 to 106 (TLTIGITDHA…YGEGWIMRIR (83 aa)) folds into the Lipoyl-binding domain. The residue at position 65 (Lys-65) is an N6-lipoyllysine. Residues 111–130 (DDLEQLLDPEDYQDLVADEE) are disordered.

The protein belongs to the GcvH family. As to quaternary structure, the glycine cleavage system is composed of four proteins: P, T, L and H. (R)-lipoate is required as a cofactor.

In terms of biological role, the glycine cleavage system catalyzes the degradation of glycine. The H protein shuttles the methylamine group of glycine from the P protein to the T protein. The polypeptide is Glycine cleavage system H protein (Alkalilimnicola ehrlichii (strain ATCC BAA-1101 / DSM 17681 / MLHE-1)).